Reading from the N-terminus, the 369-residue chain is Anthranilate phosphoribosyltransferase (369 aa).

5-phospho-alpha-D-ribose 1-diphosphate is bound by residues Gly-111, 114–115, Thr-119, 121–124, 139–147, and Ser-151; these read GD, NIST, and KHGNRGVSS. Gly-111 is an anthranilate binding site. Ser-123 is a binding site for Mg(2+). Asn-142 contacts anthranilate. Arg-197 is a binding site for anthranilate. The Mg(2+) site is built by Asp-256 and Glu-257.

It belongs to the anthranilate phosphoribosyltransferase family. As to quaternary structure, homodimer. It depends on Mg(2+) as a cofactor.

The enzyme catalyses N-(5-phospho-beta-D-ribosyl)anthranilate + diphosphate = 5-phospho-alpha-D-ribose 1-diphosphate + anthranilate. It participates in amino-acid biosynthesis; L-tryptophan biosynthesis; L-tryptophan from chorismate: step 2/5. Its function is as follows. Catalyzes the transfer of the phosphoribosyl group of 5-phosphorylribose-1-pyrophosphate (PRPP) to anthranilate to yield N-(5'-phosphoribosyl)-anthranilate (PRA). This chain is Anthranilate phosphoribosyltransferase, found in Cupriavidus pinatubonensis (strain JMP 134 / LMG 1197) (Cupriavidus necator (strain JMP 134)).